Consider the following 334-residue polypeptide: Ornithine carbamoyltransferase (334 aa).

Residues Ser-56 to Thr-59, Gln-83, Arg-107, and His-134 to Gln-137 contribute to the carbamoyl phosphate site. Residues Asn-168, Asp-232, and Ser-236–Met-237 each bind L-ornithine. Carbamoyl phosphate is bound by residues Cys-274–Leu-275 and Arg-320.

It belongs to the aspartate/ornithine carbamoyltransferase superfamily. OTCase family.

The protein resides in the cytoplasm. It carries out the reaction carbamoyl phosphate + L-ornithine = L-citrulline + phosphate + H(+). It participates in amino-acid biosynthesis; L-arginine biosynthesis; L-arginine from L-ornithine and carbamoyl phosphate: step 1/3. Reversibly catalyzes the transfer of the carbamoyl group from carbamoyl phosphate (CP) to the N(epsilon) atom of ornithine (ORN) to produce L-citrulline. The chain is Ornithine carbamoyltransferase from Shigella sonnei (strain Ss046).